A 1232-amino-acid chain; its full sequence is Histone-lysine N-methyltransferase MECOM (1232 aa).

The interval 22–68 (PEIPLEEMPDADADGITSVPSLHIQEPCSPATSSESFTPKEGSPYKA) is disordered. Positions 25–34 (PLEEMPDADA) are enriched in acidic residues. Positions 80 to 192 (DEFELRESTM…PGEELLLFMK (113 aa)) constitute an SET domain. Glycyl lysine isopeptide (Lys-Gly) (interchain with G-Cter in SUMO2) cross-links involve residues lysine 101 and lysine 192. Positions 191 to 442 (MKSEEDPHEP…NHFAAGGFFG (252 aa)) are interaction with SUV39H1 and probably MAPK9 and SMAD3. C2H2-type zinc fingers lie at residues 211–238 (HRCE…STPH), 265–287 (QDCK…MLSH), 293–315 (YKCD…QMSH), 321–344 (YECE…RSQH), and 350–372 (HACP…KHIH). Residue lysine 294 forms a Glycyl lysine isopeptide (Lys-Gly) (interchain with G-Cter in SUMO2) linkage. Residues lysine 369 and lysine 376 each participate in a glycyl lysine isopeptide (Lys-Gly) (interchain with G-Cter in SUMO2) cross-link. The C2H2-type 6 zinc finger occupies 378-400 (FICEVCHKSYTQFSNLCRHKRMH). The C2H2-type 7; atypical zinc finger occupies 407–429 (IKCKDCGQMFSTTSSLNKHRRFC). Glycyl lysine isopeptide (Lys-Gly) (interchain with G-Cter in SUMO2) cross-links involve residues lysine 432, lysine 525, lysine 545, lysine 549, and lysine 557. The tract at residues 548–622 (SKHPPVGDNK…KCKENGKMFK (75 aa)) is disordered. Residues 562-577 (LPERSSEERPLEKISD) show a composition bias toward basic and acidic residues. Over residues 588–600 (STPSGSDLETTSG) the composition is skewed to polar residues. Positions 608 to 622 (ESDKEKCKENGKMFK) are enriched in basic and acidic residues. The short motif at 611-624 (KEKCKENGKMFKDK) is the Nuclear localization signal element. Lysine 624 is covalently cross-linked (Glycyl lysine isopeptide (Lys-Gly) (interchain with G-Cter in SUMO2)). Residue serine 626 is modified to Phosphoserine. Glycyl lysine isopeptide (Lys-Gly) (interchain with G-Cter in SUMO2) cross-links involve residues lysine 637, lysine 665, lysine 687, and lysine 723. Positions 720–823 (LPLKMEPQSP…DGSLQHARPT (104 aa)) are disordered. Phosphoserine is present on serine 728. Residues lysine 733, lysine 734, and lysine 737 each participate in a glycyl lysine isopeptide (Lys-Gly) (interchain with G-Cter in SUMO2) cross-link. A Phosphoserine modification is found at serine 742. The CTBP-binding motif 1 signature appears at 743 to 747 (PFDLT). Glycyl lysine isopeptide (Lys-Gly) (interchain with G-Cter in SUMO2) cross-links involve residues lysine 751, lysine 754, and lysine 762. The span at 758–773 (SGPSKPSGTPATSQDQ) shows a compositional bias: polar residues. Residues 774 to 778 (PLDLS) carry the CTBP-binding motif 2 motif. Glycyl lysine isopeptide (Lys-Gly) (interchain with G-Cter in SUMO2) cross-links involve residues lysine 789, lysine 802, and lysine 803. The segment covering 791–805 (TEPRKNHVFGEKKGS) has biased composition (basic and acidic residues). Over residues 806–816 (NMDTRPSSDGS) the composition is skewed to polar residues. Glycyl lysine isopeptide (Lys-Gly) (interchain with G-Cter in SUMO2) cross-links involve residues lysine 837, lysine 846, lysine 848, and lysine 879. 3 consecutive C2H2-type zinc fingers follow at residues 914 to 936 (YTCR…LRTH), 942 to 965 (YRCK…RNIH), and 971 to 993 (FKCH…LKKH). Lysine 1020 is covalently cross-linked (Glycyl lysine isopeptide (Lys-Gly) (interchain with G-Cter in SUMO2)). Over residues 1032 to 1043 (IGNSNHGSQSPR) the composition is skewed to polar residues. Positions 1032 to 1107 (IGNSNHGSQS…GVTRLDEEIP (76 aa)) are disordered. Residues serine 1039 and serine 1041 each carry the phosphoserine modification. Residues 1044–1059 (NMEERMNGSHFKDKKA) are compositionally biased toward basic and acidic residues. Glycyl lysine isopeptide (Lys-Gly) (interchain with G-Cter in SUMO2) cross-links involve residues lysine 1055 and lysine 1058. Acidic residues predominate over residues 1068-1088 (LLDDEEVEDEVLLDEEDEDND). Residues 1089-1104 (IPGKPRKELGVTRLDE) show a composition bias toward basic and acidic residues. Glycyl lysine isopeptide (Lys-Gly) (interchain with G-Cter in SUMO2) cross-links involve residues lysine 1122, lysine 1129, lysine 1134, lysine 1151, lysine 1178, and lysine 1186.

As to quaternary structure, homooligomer. Interacts with CTBP1. Interacts with SMAD3 (via MH2 domain); the interaction is direct. Interacts with SMAD4; through interaction with SMAD3. Interacts with CREBBP, KAT2B and histone deacetylases. Interacts with MAPK8 and MAPK9; inhibits JNK signaling. Interacts with SUV39H1 (via SET domain); enhances MECOM transcriptional repression activity. May be acetylated by CREBBP and KAT2B.

The protein localises to the nucleus. It is found in the nucleus speckle. The protein resides in the cytoplasm. The catalysed reaction is L-lysyl(9)-[histone H3] + S-adenosyl-L-methionine = N(6)-methyl-L-lysyl(9)-[histone H3] + S-adenosyl-L-homocysteine + H(+). Functions as a transcriptional regulator binding to DNA sequences in the promoter region of target genes and regulating positively or negatively their expression. Oncogene which plays a role in development, cell proliferation and differentiation. May also play a role in apoptosis through regulation of the JNK and TGF-beta signaling. Involved in hematopoiesis. In terms of biological role, displays histone methyltransferase activity and monomethylates 'Lys-9' of histone H3 (H3K9me1) in vitro. Probably catalyzes the monomethylation of free histone H3 in the cytoplasm which is then transported to the nucleus and incorporated into nucleosomes where SUV39H methyltransferases use it as a substrate to catalyze histone H3 'Lys-9' trimethylation. Likely to be one of the primary histone methyltransferases along with PRDM16 that direct cytoplasmic H3K9me1 methylation. The polypeptide is Histone-lysine N-methyltransferase MECOM (Mus musculus (Mouse)).